The following is a 341-amino-acid chain: Anthranilate phosphoribosyltransferase (341 aa).

5-phospho-alpha-D-ribose 1-diphosphate is bound by residues Gly-81, 84 to 85 (GD), Thr-89, 91 to 94 (NIST), 109 to 117 (KHGNRKASS), and Thr-121. Gly-81 contributes to the anthranilate binding site. Ser-93 is a binding site for Mg(2+). An anthranilate-binding site is contributed by Asn-112. Arg-167 contacts anthranilate. Asp-226 and Glu-227 together coordinate Mg(2+).

The protein belongs to the anthranilate phosphoribosyltransferase family. As to quaternary structure, homodimer. Mg(2+) is required as a cofactor.

The catalysed reaction is N-(5-phospho-beta-D-ribosyl)anthranilate + diphosphate = 5-phospho-alpha-D-ribose 1-diphosphate + anthranilate. Its pathway is amino-acid biosynthesis; L-tryptophan biosynthesis; L-tryptophan from chorismate: step 2/5. Functionally, catalyzes the transfer of the phosphoribosyl group of 5-phosphorylribose-1-pyrophosphate (PRPP) to anthranilate to yield N-(5'-phosphoribosyl)-anthranilate (PRA). In Parvibaculum lavamentivorans (strain DS-1 / DSM 13023 / NCIMB 13966), this protein is Anthranilate phosphoribosyltransferase.